We begin with the raw amino-acid sequence, 544 residues long: Chaperonin GroEL 2 (544 aa).

ATP is bound by residues threonine 29–proline 32, aspartate 86–threonine 90, glycine 413, asparagine 479–alanine 481, and aspartate 495.

The protein belongs to the chaperonin (HSP60) family. As to quaternary structure, forms a cylinder of 14 subunits composed of two heptameric rings stacked back-to-back. Interacts with the co-chaperonin GroES.

It localises to the cytoplasm. The enzyme catalyses ATP + H2O + a folded polypeptide = ADP + phosphate + an unfolded polypeptide.. Together with its co-chaperonin GroES, plays an essential role in assisting protein folding. The GroEL-GroES system forms a nano-cage that allows encapsulation of the non-native substrate proteins and provides a physical environment optimized to promote and accelerate protein folding. The polypeptide is Chaperonin GroEL 2 (Prochlorococcus marinus subsp. pastoris (strain CCMP1986 / NIES-2087 / MED4)).